The following is a 183-amino-acid chain: Helofensin-1 (183 aa).

The signal sequence occupies residues 1-26; it reads MQMDWLFIAVVSAIGLLSSGVPGTQG. Residues 27-64 form a C(6)C(4)C(9)C(6)CC 1; approximate repeat; it reads AYTTEQCRALNGTCRFYACFPKNVVIGKCDWLGWGCCA. The C(6)C(4)C(9)C(6)CC 2; approximate repeat unit spans residues 65–101; that stretch reads RTPLERCTAKKGTCTASGCTETDTDHGPCDGGAQCCQ. The stretch at 102-139 is one C(6)C(4)C(9)C(6)CC 3; approximate repeat; the sequence is RDPVKYCKFHGNVCGRGKCPMDHIPIGEQCMPGYPCCK. The stretch at 140–177 is one C(6)C(4)C(9)C(6)CC 4; approximate repeat; sequence RDGPAYCKSKGGKCLRRCSQIVPTDIIGVCADGVPCCK.

The protein belongs to the beta-defensin family. Helofensin subfamily. Expressed by the mandibular venom gland.

The protein resides in the secreted. In terms of biological role, lethal toxin which possesses an inhibitory effect on direct electrical stimulation of the isolated hemi-diaphragm of mice. Neither hemorrhagic nor hemolytic activities are detected. Phospholipase A2 activity, proteolytic activity and arginine esterolytic activity are absent. This is Helofensin-1 from Heloderma suspectum cinctum (Banded Gila monster).